Here is a 164-residue protein sequence, read N- to C-terminus: Putative HTH-type transcriptional regulator ORF2 (164 aa).

The HTH rrf2-type domain occupies R2–A131.

This Azotobacter vinelandii protein is Putative HTH-type transcriptional regulator ORF2.